A 714-amino-acid polypeptide reads, in one-letter code: Mitochondrial potassium channel ATP-binding subunit (714 aa).

The N-terminal 25 residues, 1-25 (MLVHLFRVGIRGGPVPRWSLQSLRF), are a transit peptide targeting the mitochondrion. The next 4 membrane-spanning stretches (helical) occupy residues 127–147 (LLALGLAIVLALGAALVNVQI), 178–198 (IQLLLLYGVQGLLTFGYLVLL), 278–298 (LMLAVVTPALMGVGTLMGSGL), and 365–385 (NIAFNCMVLGTLFIGGSLVAG). Residues 132-419 (LAIVLALGAA…LSVLFGQVVR (288 aa)) form the ABC transmembrane type-1 domain. The region spanning 454 to 691 (ITFQNVSFSY…GGLYAELIRR (238 aa)) is the ABC transporter domain. 489 to 496 (GQSGGGKT) contributes to the ATP binding site.

It belongs to the ABC transporter superfamily. ABCB family. Multidrug resistance exporter (TC 3.A.1.201) subfamily. In terms of assembly, the mitochondrial potassium channel (mitoK(ATP)) is composed of 4 subunits of CCDC51/MITOK and 4 subunits of ABCB8/MITOSUR. Physically interacts with PAAT. Interacts with Neuropilin-1 (NRP1) in mitochondria. In terms of tissue distribution, strong expression is found in the heart, brain and testis. In the testis, expressed both in the somatic Sertoli cells and peritubular cells and in the germline (spermatogonia and pachytene spermatocytes). Also expressed in the lung, liver, intestine and kidney.

The protein resides in the mitochondrion inner membrane. With respect to regulation, channel activity inhibited by ATP via ABCB8/MITOSUR subunit. In terms of biological role, ATP-binding subunit of the mitochondrial ATP-gated potassium channel (mitoK(ATP)). v. An increase in ATP intracellular levels closes the channel, inhibiting K(+) transport, whereas a decrease in ATP levels enhances K(+) uptake in the mitochondrial matrix. Plays a role in mitochondrial iron transport. Required for maintenance of normal cardiac function, possibly by influencing mitochondrial iron export and regulating the maturation of cytosolic iron sulfur cluster-containing enzymes. The protein is Mitochondrial potassium channel ATP-binding subunit of Rattus norvegicus (Rat).